The sequence spans 634 residues: Chaperone protein HtpG (634 aa).

Positions 1–344 are a; substrate-binding; sequence MSETVSQNKE…SNDLPLNVSR (344 aa). The tract at residues 345-561 is b; sequence EILQDNKVTQ…DYEMGTQMAK (217 aa). The segment at 562 to 634 is c; it reads LLAAAGQAVP…GAINKLLTKV (73 aa).

The protein belongs to the heat shock protein 90 family. In terms of assembly, homodimer.

It localises to the cytoplasm. Its function is as follows. Molecular chaperone. Has ATPase activity. This Vibrio parahaemolyticus serotype O3:K6 (strain RIMD 2210633) protein is Chaperone protein HtpG.